Reading from the N-terminus, the 227-residue chain is Cytochrome c oxidase subunit 2 (227 aa).

Over 1-14 (MAYPFQLGFQDATS) the chain is Mitochondrial intermembrane. A helical membrane pass occupies residues 15–45 (PIMEELLHFHDHTLMIVFLISSLVLYIITLM). At 46–59 (LTTKLTHTSTMDAQ) the chain is on the mitochondrial matrix side. A helical transmembrane segment spans residues 60 to 87 (EVETVWTILPAIILILIALPSLRILYMM). Residues 88-227 (DEVNNPSLTV…IFEKWSASML (140 aa)) are Mitochondrial intermembrane-facing. Cu cation-binding residues include His-161, Cys-196, Glu-198, Cys-200, His-204, and Met-207. Glu-198 contributes to the Mg(2+) binding site.

This sequence belongs to the cytochrome c oxidase subunit 2 family. As to quaternary structure, component of the cytochrome c oxidase (complex IV, CIV), a multisubunit enzyme composed of 14 subunits. The complex is composed of a catalytic core of 3 subunits MT-CO1, MT-CO2 and MT-CO3, encoded in the mitochondrial DNA, and 11 supernumerary subunits COX4I, COX5A, COX5B, COX6A, COX6B, COX6C, COX7A, COX7B, COX7C, COX8 and NDUFA4, which are encoded in the nuclear genome. The complex exists as a monomer or a dimer and forms supercomplexes (SCs) in the inner mitochondrial membrane with NADH-ubiquinone oxidoreductase (complex I, CI) and ubiquinol-cytochrome c oxidoreductase (cytochrome b-c1 complex, complex III, CIII), resulting in different assemblies (supercomplex SCI(1)III(2)IV(1) and megacomplex MCI(2)III(2)IV(2)). Found in a complex with TMEM177, COA6, COX18, COX20, SCO1 and SCO2. Interacts with TMEM177 in a COX20-dependent manner. Interacts with COX20. Interacts with COX16. It depends on Cu cation as a cofactor.

Its subcellular location is the mitochondrion inner membrane. It carries out the reaction 4 Fe(II)-[cytochrome c] + O2 + 8 H(+)(in) = 4 Fe(III)-[cytochrome c] + 2 H2O + 4 H(+)(out). Component of the cytochrome c oxidase, the last enzyme in the mitochondrial electron transport chain which drives oxidative phosphorylation. The respiratory chain contains 3 multisubunit complexes succinate dehydrogenase (complex II, CII), ubiquinol-cytochrome c oxidoreductase (cytochrome b-c1 complex, complex III, CIII) and cytochrome c oxidase (complex IV, CIV), that cooperate to transfer electrons derived from NADH and succinate to molecular oxygen, creating an electrochemical gradient over the inner membrane that drives transmembrane transport and the ATP synthase. Cytochrome c oxidase is the component of the respiratory chain that catalyzes the reduction of oxygen to water. Electrons originating from reduced cytochrome c in the intermembrane space (IMS) are transferred via the dinuclear copper A center (CU(A)) of subunit 2 and heme A of subunit 1 to the active site in subunit 1, a binuclear center (BNC) formed by heme A3 and copper B (CU(B)). The BNC reduces molecular oxygen to 2 water molecules using 4 electrons from cytochrome c in the IMS and 4 protons from the mitochondrial matrix. In Balaenoptera borealis (Sei whale), this protein is Cytochrome c oxidase subunit 2 (MT-CO2).